The following is a 298-amino-acid chain: Lipoyl synthase (298 aa).

[4Fe-4S] cluster contacts are provided by cysteine 40, cysteine 45, cysteine 51, cysteine 67, cysteine 71, cysteine 74, and serine 280. A Radical SAM core domain is found at 53 to 269; it reads AVRRTATFMI…KEIAMAKGFS (217 aa).

This sequence belongs to the radical SAM superfamily. Lipoyl synthase family. Requires [4Fe-4S] cluster as cofactor.

The protein resides in the cytoplasm. The catalysed reaction is [[Fe-S] cluster scaffold protein carrying a second [4Fe-4S](2+) cluster] + N(6)-octanoyl-L-lysyl-[protein] + 2 oxidized [2Fe-2S]-[ferredoxin] + 2 S-adenosyl-L-methionine + 4 H(+) = [[Fe-S] cluster scaffold protein] + N(6)-[(R)-dihydrolipoyl]-L-lysyl-[protein] + 4 Fe(3+) + 2 hydrogen sulfide + 2 5'-deoxyadenosine + 2 L-methionine + 2 reduced [2Fe-2S]-[ferredoxin]. Its pathway is protein modification; protein lipoylation via endogenous pathway; protein N(6)-(lipoyl)lysine from octanoyl-[acyl-carrier-protein]. Its function is as follows. Catalyzes the radical-mediated insertion of two sulfur atoms into the C-6 and C-8 positions of the octanoyl moiety bound to the lipoyl domains of lipoate-dependent enzymes, thereby converting the octanoylated domains into lipoylated derivatives. This is Lipoyl synthase from Bacillus pumilus (strain SAFR-032).